Here is a 1439-residue protein sequence, read N- to C-terminus: Mediator of RNA polymerase II transcription subunit 23 (1439 aa).

A coiled-coil region spans residues 282-318; sequence SQMLNLQKHQKQRYNALEEQLVNLIVQAMEMTEANDA. The segment at 358–625 is interaction with Hsf; it reads HIVLALHEKL…HHVPTHYRVQ (268 aa). Disordered regions lie at residues 1338-1372 and 1401-1439; these read NDNTSNNAITSQTQSPMQTQHQQQPQQPHQQQQQQ and SVPLGSGGNLQQQQQINQQQQMYMQHMQQHQHMQNMRHN. Low complexity-rich tracts occupy residues 1348 to 1372 and 1411 to 1439; these read SQTQSPMQTQHQQQPQQPHQQQQQQ and QQQQQINQQQQMYMQHMQQHQHMQNMRHN.

The protein belongs to the Mediator complex subunit 23 family. Component of the Mediator complex. Interacts with Hsf.

The protein resides in the nucleus. Component of the Mediator complex, a coactivator involved in the regulated transcription of nearly all RNA polymerase II-dependent genes. Mediator functions as a bridge to convey information from gene-specific regulatory proteins to the basal RNA polymerase II transcription machinery. Mediator is recruited to promoters by direct interactions with regulatory proteins and serves as a scaffold for the assembly of a functional preinitiation complex with RNA polymerase II and the general transcription factors. Required for transcriptional activation in response to heat shock. In Drosophila melanogaster (Fruit fly), this protein is Mediator of RNA polymerase II transcription subunit 23 (MED23).